The following is a 646-amino-acid chain: Elongation factor 4 (646 aa).

The tr-type G domain occupies 42 to 227; that stretch reads AQIRNFCIIA…EVVRRVPHPQ (186 aa). GTP contacts are provided by residues 54 to 59 and 174 to 177; these read DHGKST and NKID.

Belongs to the TRAFAC class translation factor GTPase superfamily. Classic translation factor GTPase family. LepA subfamily.

The protein localises to the cell membrane. It carries out the reaction GTP + H2O = GDP + phosphate + H(+). In terms of biological role, required for accurate and efficient protein synthesis under certain stress conditions. May act as a fidelity factor of the translation reaction, by catalyzing a one-codon backward translocation of tRNAs on improperly translocated ribosomes. Back-translocation proceeds from a post-translocation (POST) complex to a pre-translocation (PRE) complex, thus giving elongation factor G a second chance to translocate the tRNAs correctly. Binds to ribosomes in a GTP-dependent manner. The protein is Elongation factor 4 of Mycobacterium leprae (strain Br4923).